The sequence spans 32 residues: Islet amyloid polypeptide (32 aa).

Belongs to the calcitonin family. Can form homodimers. Interacts with IDE and INS. Interaction with INS inhibits homodimerization and fibril formation.

The protein resides in the secreted. In terms of biological role, amylin/IAPP is a glucoregulatory peptide hormone that plays an important role in the regulation of energy homeostasis. Selectively inhibits insulin-stimulated glucose utilization and glycogen deposition in muscle, while not affecting adipocyte glucose metabolism. IAPP function is mediated by the CALCR-RAMPs (AMYRs) receptor complexes. Amylin can also bind CALCR receptor in the absence of RAMPs, although it is more selective for AMYRs. The chain is Islet amyloid polypeptide (IAPP) from Saguinus oedipus (Cotton-top tamarin).